A 123-amino-acid chain; its full sequence is Small ribosomal subunit protein uS12 (123 aa).

Position 89 is a 3-methylthioaspartic acid (Asp89).

It belongs to the universal ribosomal protein uS12 family. In terms of assembly, part of the 30S ribosomal subunit. Contacts proteins S8 and S17. May interact with IF1 in the 30S initiation complex.

Its function is as follows. With S4 and S5 plays an important role in translational accuracy. In terms of biological role, interacts with and stabilizes bases of the 16S rRNA that are involved in tRNA selection in the A site and with the mRNA backbone. Located at the interface of the 30S and 50S subunits, it traverses the body of the 30S subunit contacting proteins on the other side and probably holding the rRNA structure together. The combined cluster of proteins S8, S12 and S17 appears to hold together the shoulder and platform of the 30S subunit. The chain is Small ribosomal subunit protein uS12 from Nitrobacter hamburgensis (strain DSM 10229 / NCIMB 13809 / X14).